The chain runs to 272 residues: Undecaprenyl-diphosphatase (272 aa).

8 helical membrane-spanning segments follow: residues 4–24 (FEVI…FLPI), 43–63 (GGRV…CWLY), 86–106 (ISVL…VDFI), 109–129 (VLFS…IIFW), 145–165 (ITFK…IPGT), 186–206 (TEFS…FDLI), 222–242 (VGFV…VLFV), and 249–269 (VFAW…MFFN).

This sequence belongs to the UppP family.

It localises to the cell inner membrane. The enzyme catalyses di-trans,octa-cis-undecaprenyl diphosphate + H2O = di-trans,octa-cis-undecaprenyl phosphate + phosphate + H(+). Catalyzes the dephosphorylation of undecaprenyl diphosphate (UPP). Confers resistance to bacitracin. The chain is Undecaprenyl-diphosphatase from Acinetobacter baumannii (strain AB307-0294).